Reading from the N-terminus, the 306-residue chain is UDP-N-acetylenolpyruvoylglucosamine reductase (306 aa).

The region spanning 34–198 (VGGPADLLIT…LEVTFKLHNS (165 aa)) is the FAD-binding PCMH-type domain. Residue R177 is part of the active site. Residue S227 is the Proton donor of the active site. The active site involves E297.

This sequence belongs to the MurB family. It depends on FAD as a cofactor.

The protein resides in the cytoplasm. The catalysed reaction is UDP-N-acetyl-alpha-D-muramate + NADP(+) = UDP-N-acetyl-3-O-(1-carboxyvinyl)-alpha-D-glucosamine + NADPH + H(+). It functions in the pathway cell wall biogenesis; peptidoglycan biosynthesis. In terms of biological role, cell wall formation. The polypeptide is UDP-N-acetylenolpyruvoylglucosamine reductase (Clostridium botulinum (strain Okra / Type B1)).